The primary structure comprises 138 residues: SPbeta prophage-derived uncharacterized protein YopJ (138 aa).

The chain is SPbeta prophage-derived uncharacterized protein YopJ (yopJ) from Bacillus subtilis (strain 168).